Reading from the N-terminus, the 1829-residue chain is Unconventional myosin-Va (1829 aa).

In terms of domain architecture, Myosin N-terminal SH3-like spans 8 to 60 (TKYARVWIPDPEEVWKSAELLKDYKPGDKVLQLRLEEGKDLEYCLDPKTKELP). In terms of domain architecture, Myosin motor spans 69–764 (VGENDLTALS…QVAYLEKIRA (696 aa)). Position 163–170 (163–170 (GESGAGKT)) interacts with ATP. The tract at residues 599–635 (AISPTSATPSGRVPLSRTPVKPAKARPGQTSKEHKKT) is disordered. Positions 644 to 666 (LHLLMETLNATTPHYVRCIKPND) are actin-binding. IQ domains are found at residues 767 to 789 (LRAA…KYMR), 790 to 814 (MRRA…TFLR), 815 to 837 (RTRA…RYQC), 838 to 862 (MRDA…QMML), 863 to 887 (REHK…HRTL), and 888 to 915 (KAIV…EARS). Coiled-coil stretches lie at residues 916-1239 (VERY…PEVT) and 1315-1419 (GLKE…ELEV). Disordered regions lie at residues 1106-1148 (IPKP…SEKK) and 1170-1199 (KQSL…PIRG). The span at 1117 to 1131 (THSSNESEYTFSSEI) shows a compositional bias: polar residues. Composition is skewed to basic and acidic residues over residues 1137–1148 (LPLRMEEPSEKK) and 1170–1196 (KQSL…ERPP). One can recognise a Dilute domain in the interval 1508 to 1784 (TSTINGIKKV…IRTIQLRLRD (277 aa)). T1734 bears the Phosphothreonine mark.

This sequence belongs to the TRAFAC class myosin-kinesin ATPase superfamily. Myosin family. In terms of assembly, may be a homodimer, which associates with multiple calmodulin or myosin light chains. Neuronal and non-neuronal cells of the brain.

It is found in the golgi apparatus membrane. The catalysed reaction is ATP + H2O = ADP + phosphate + H(+). Its function is as follows. Processive actin-based motor that can move in large steps approximating the 36-nm pseudo-repeat of the actin filament. Can hydrolyze ATP in the presence of actin, which is essential for its function as a motor protein. Involved in melanosome transport. Also mediates the transport of vesicles to the plasma membrane. May also be required for some polarization process involved in dendrite formation. The sequence is that of Unconventional myosin-Va (MYO5A) from Gallus gallus (Chicken).